The sequence spans 168 residues: UPF0178 protein RBAM_023530 (168 aa).

The protein belongs to the UPF0178 family.

The sequence is that of UPF0178 protein RBAM_023530 from Bacillus velezensis (strain DSM 23117 / BGSC 10A6 / LMG 26770 / FZB42) (Bacillus amyloliquefaciens subsp. plantarum).